A 119-amino-acid chain; its full sequence is Large ribosomal subunit protein uL18 (119 aa).

This sequence belongs to the universal ribosomal protein uL18 family. Part of the 50S ribosomal subunit; part of the 5S rRNA/L5/L18/L25 subcomplex. Contacts the 5S and 23S rRNAs.

Its function is as follows. This is one of the proteins that bind and probably mediate the attachment of the 5S RNA into the large ribosomal subunit, where it forms part of the central protuberance. In Clostridium botulinum (strain Okra / Type B1), this protein is Large ribosomal subunit protein uL18.